The sequence spans 868 residues: Hopanoid transporter HpnN (868 aa).

Helical transmembrane passes span 16–36 (FAAF…FYTY), 273–293 (GAVV…WMAL), 298–318 (IIFA…AVGL), 326–346 (LLSI…GIQF), 370–390 (YSAV…LSFL), 403–423 (IAGA…PALL), 452–472 (IAII…LYFM), 710–730 (IVAS…ILLW), 740–760 (ALTL…CVLI), 762–782 (LPLN…GVAF), 805–825 (AIFF…LSSH), and 834–854 (LLAL…PALM). The SSD domain occupies 299 to 425 (IFAVAANLVI…ITVLPALLKL (127 aa)).

The protein belongs to the resistance-nodulation-cell division (RND) (TC 2.A.6) family. MmpL subfamily.

The protein localises to the cell inner membrane. Functionally, essential for hopanoid transport from the cytoplasmic to the outer membrane. Required for the C(35) hopanoid, bacteriohopanetetrol, to remain localized to the mother cell type. The protein is Hopanoid transporter HpnN of Rhodopseudomonas palustris (strain TIE-1).